The primary structure comprises 496 residues: Aldehyde dehydrogenase (496 aa).

Residues glutamate 263 and cysteine 296 contribute to the active site.

Belongs to the aldehyde dehydrogenase family.

The protein resides in the cytoplasm. It catalyses the reaction an aldehyde + NAD(+) + H2O = a carboxylate + NADH + 2 H(+). The protein is Aldehyde dehydrogenase (CLAH10) of Davidiella tassiana (Mycosphaerella tassiana).